The primary structure comprises 203 residues: MIVKICGITLPSQAREISEYGADYIGVITYPKSPRYVDVERIKEIKEKLKNSKLVAVVVNPSLEQVLELLNIADFIQFHGDEGLDFVKNFPKDRVIKAIRVKNESDLEKIKTFKNEDITVLVDAFKEGVYGGTGEMIDLNLLKKITDMYDKVIISGGLSESNIKEILNHVKPYGVDASSKLEVSPGVKDLDKVKKFIDIVKNR.

The protein belongs to the TrpF family.

It carries out the reaction N-(5-phospho-beta-D-ribosyl)anthranilate = 1-(2-carboxyphenylamino)-1-deoxy-D-ribulose 5-phosphate. The protein operates within amino-acid biosynthesis; L-tryptophan biosynthesis; L-tryptophan from chorismate: step 3/5. The polypeptide is N-(5'-phosphoribosyl)anthranilate isomerase (Sulfurihydrogenibium sp. (strain YO3AOP1)).